Consider the following 251-residue polypeptide: Hydroxyacylglutathione hydrolase (251 aa).

Positions 53, 55, 57, 58, 110, 127, and 165 each coordinate Zn(2+).

Belongs to the metallo-beta-lactamase superfamily. Glyoxalase II family. As to quaternary structure, monomer. The cofactor is Zn(2+).

The catalysed reaction is an S-(2-hydroxyacyl)glutathione + H2O = a 2-hydroxy carboxylate + glutathione + H(+). The protein operates within secondary metabolite metabolism; methylglyoxal degradation; (R)-lactate from methylglyoxal: step 2/2. Its function is as follows. Thiolesterase that catalyzes the hydrolysis of S-D-lactoyl-glutathione to form glutathione and D-lactic acid. The polypeptide is Hydroxyacylglutathione hydrolase (Shigella boydii serotype 18 (strain CDC 3083-94 / BS512)).